The following is a 284-amino-acid chain: 4-hydroxybenzoate octaprenyltransferase (284 aa).

9 helical membrane-spanning segments follow: residues 19-39 (IPILLILWPTLTALVLASHGL), 42-62 (ISYLVIFTIGVVVMRTVGCII), 85-105 (GQLSIKNAIWLCISLTLVAFI), 107-127 (VLFLNLYTILLSFVALFLAIL), 134-154 (FFAIPQLILGLAFNFGIFMAF), 165-185 (AWIFYLATICWTIAYDTIYAL), 211-231 (ILLFNFLSLLLLIILGIYCDF), 233-253 (SFFYLGVVICSLFFVRNYFLY), and 261-281 (CINAFSANHWIGLIIFIMAVI).

This sequence belongs to the UbiA prenyltransferase family. Mg(2+) is required as a cofactor.

It is found in the cell inner membrane. It catalyses the reaction all-trans-octaprenyl diphosphate + 4-hydroxybenzoate = 4-hydroxy-3-(all-trans-octaprenyl)benzoate + diphosphate. It functions in the pathway cofactor biosynthesis; ubiquinone biosynthesis. Its function is as follows. Catalyzes the prenylation of para-hydroxybenzoate (PHB) with an all-trans polyprenyl group. Mediates the second step in the final reaction sequence of ubiquinone-8 (UQ-8) biosynthesis, which is the condensation of the polyisoprenoid side chain with PHB, generating the first membrane-bound Q intermediate 3-octaprenyl-4-hydroxybenzoate. This Francisella tularensis subsp. novicida (strain U112) protein is 4-hydroxybenzoate octaprenyltransferase.